The following is a 1324-amino-acid chain: Sal-like protein 1 (1324 aa).

The interval 1–42 is disordered; the sequence is MSRRKQAKPQHFQSDPEVASLPRRDGDTEKGQPSRPTKSKDA. The span at 22–42 shows a compositional bias: basic and acidic residues; sequence PRRDGDTEKGQPSRPTKSKDA. A C2H2-type 1; atypical zinc finger spans residues 43–65; the sequence is HVCGRCCAEFFELSDLLLHKKNC. Disordered regions lie at residues 77 to 102, 108 to 127, 132 to 172, and 317 to 336; these read NPAS…NDTV, VDCS…SMEV, ANKS…TSAI, and PPIQ…SNSG. Positions 113-124 are enriched in basic and acidic residues; it reads LSEHNGLDREES. A compositionally biased stretch (low complexity) spans 135 to 158; the sequence is SGSGTSSGSHSSTAPSSSSSSSSS. Polar residues predominate over residues 321 to 336; sequence LPQSSSGNTIIPSNSG. Lys-439 participates in a covalent cross-link: Glycyl lysine isopeptide (Lys-Gly) (interchain with G-Cter in SUMO2). 2 consecutive C2H2-type zinc fingers follow at residues 449 to 471 and 477 to 499; these read HKCR…LRSH and FKCN…FQRH. Residues 577 to 646 form a disordered region; sequence PIPISHSATS…ASSSVLSSPA (70 aa). 3 positions are modified to phosphoserine: Ser-590, Ser-593, and Ser-595. Low complexity predominate over residues 633–646; the sequence is SVPTASSSVLSSPA. Glycyl lysine isopeptide (Lys-Gly) (interchain with G-Cter in SUMO2) cross-links involve residues Lys-673, Lys-690, and Lys-701. 3 consecutive C2H2-type zinc fingers follow at residues 706–728, 734–756, and 766–788; these read NECI…YRTH, FKCK…YSVH, and HSCP…IRMH. Disordered regions lie at residues 790 to 856 and 894 to 963; these read GGQI…SSPL and EGDV…LSPT. Residues 802-811 show a composition bias toward polar residues; sequence YSESMESDTG. The span at 820 to 833 shows a compositional bias: acidic residues; the sequence is DLDNFSDENMEDCP. Residues 843–856 show a composition bias toward low complexity; sequence SADASQDSLSSSPL. The segment covering 899 to 936 has biased composition (polar residues); the sequence is TNDSSSVGGDMESQSAGSPAISESTSSMQALSPSNSTQ. The segment covering 937 to 949 has biased composition (basic and acidic residues); that stretch reads EFHKSPSIEEKPQ. A phosphoserine mark is found at Ser-941 and Ser-943. Glycyl lysine isopeptide (Lys-Gly) (interchain with G-Cter in SUMO2) cross-links involve residues Lys-947 and Lys-982. 2 consecutive C2H2-type zinc fingers follow at residues 1001–1023 and 1029–1051; these read TACD…YRSH and FICT…MLTH. A Glycyl lysine isopeptide (Lys-Gly) (interchain with G-Cter in SUMO2) cross-link involves residue Lys-1086. The interval 1095–1120 is disordered; the sequence is VSPQDSKDTPTSHVPSGPLSSSATSP. Positions 1105-1119 are enriched in polar residues; the sequence is TSHVPSGPLSSSATS. 2 C2H2-type zinc fingers span residues 1134-1156 and 1162-1184; these read HYCN…ERTH and FACT…MGTH. Residues Lys-1219, Lys-1299, and Lys-1319 each participate in a glycyl lysine isopeptide (Lys-Gly) (interchain with G-Cter in SUMO2) cross-link.

The protein belongs to the sal C2H2-type zinc-finger protein family. In terms of assembly, may associate with NuRD histone deacetylase complex (HDAC). Interacts with components of HDAC complex including HDAC1, HDAC2, RBBP4, RBPP7, MTA1 and MTA2. Interacts with CCNQ. Interacts with NSD2 (via PHD-type zinc fingers 1, 2 and 3). As to expression, highest levels in kidney. Lower levels in adult brain (enriched in corpus callosum, lower expression in substantia nigra) and liver.

Its subcellular location is the nucleus. Transcriptional repressor involved in organogenesis. Plays an essential role in ureteric bud invasion during kidney development. The chain is Sal-like protein 1 (SALL1) from Homo sapiens (Human).